We begin with the raw amino-acid sequence, 372 residues long: NAD(P)H-quinone oxidoreductase subunit 1 (372 aa).

8 helical membrane-spanning segments follow: residues leucine 27–valine 47, leucine 97–valine 117, valine 128–methionine 148, alanine 166–methionine 186, isoleucine 204–leucine 224, valine 266–valine 286, alanine 308–leucine 328, and phenylalanine 347–proline 367.

This sequence belongs to the complex I subunit 1 family. As to quaternary structure, NDH-1 is composed of at least 11 different subunits.

It is found in the cellular thylakoid membrane. The enzyme catalyses a plastoquinone + NADH + (n+1) H(+)(in) = a plastoquinol + NAD(+) + n H(+)(out). The catalysed reaction is a plastoquinone + NADPH + (n+1) H(+)(in) = a plastoquinol + NADP(+) + n H(+)(out). Functionally, NDH-1 shuttles electrons from an unknown electron donor, via FMN and iron-sulfur (Fe-S) centers, to quinones in the respiratory and/or the photosynthetic chain. The immediate electron acceptor for the enzyme in this species is believed to be plastoquinone. Couples the redox reaction to proton translocation, and thus conserves the redox energy in a proton gradient. In Synechococcus sp. (strain WH7803), this protein is NAD(P)H-quinone oxidoreductase subunit 1.